The following is a 185-amino-acid chain: Transmembrane protein 252 (185 aa).

2 consecutive transmembrane segments (helical) span residues 8 to 28 (VLCALSLLTGFLMICLGGFFI) and 39 to 59 (LVVAYVLLPLGFVILLSGIFW). Residues 125–149 (YTETSLEPQDKDKNDPQPEAPPPYP) form a disordered region.

It is found in the membrane. The sequence is that of Transmembrane protein 252 (Tmem252) from Rattus norvegicus (Rat).